Consider the following 379-residue polypeptide: DNA-directed RNA polymerase subunit Rpo1C (379 aa).

The protein belongs to the RNA polymerase beta' chain family. Part of the RNA polymerase complex.

It is found in the cytoplasm. It catalyses the reaction RNA(n) + a ribonucleoside 5'-triphosphate = RNA(n+1) + diphosphate. Functionally, DNA-dependent RNA polymerase (RNAP) catalyzes the transcription of DNA into RNA using the four ribonucleoside triphosphates as substrates. Forms part of the jaw domain. The chain is DNA-directed RNA polymerase subunit Rpo1C from Pyrobaculum aerophilum (strain ATCC 51768 / DSM 7523 / JCM 9630 / CIP 104966 / NBRC 100827 / IM2).